Here is a 221-residue protein sequence, read N- to C-terminus: Orotate phosphoribosyltransferase (221 aa).

Lys-26 contacts 5-phospho-alpha-D-ribose 1-diphosphate. Residue 34–35 (FF) coordinates orotate. Residues 72-73 (YK), Arg-98, Lys-99, Lys-102, His-104, and 123-131 (DDVISAGTS) each bind 5-phospho-alpha-D-ribose 1-diphosphate. Orotate-binding residues include Ser-127 and Arg-155.

The protein belongs to the purine/pyrimidine phosphoribosyltransferase family. PyrE subfamily. As to quaternary structure, homodimer. Mg(2+) serves as cofactor.

The enzyme catalyses orotidine 5'-phosphate + diphosphate = orotate + 5-phospho-alpha-D-ribose 1-diphosphate. It functions in the pathway pyrimidine metabolism; UMP biosynthesis via de novo pathway; UMP from orotate: step 1/2. Catalyzes the transfer of a ribosyl phosphate group from 5-phosphoribose 1-diphosphate to orotate, leading to the formation of orotidine monophosphate (OMP). The chain is Orotate phosphoribosyltransferase from Janthinobacterium sp. (strain Marseille) (Minibacterium massiliensis).